A 295-amino-acid polypeptide reads, in one-letter code: Glutamate-binding protein GluB (295 aa).

Residues 1–26 form the signal peptide; it reads MSAKRTFTRIGAILGATALAGVTLTA. Cys27 carries the N-palmitoyl cysteine lipid modification. A lipid anchor (S-diacylglycerol cysteine) is attached at Cys27.

Belongs to the bacterial solute-binding protein 3 family. The complex is composed of two ATP-binding proteins (GluA), two transmembrane proteins (GluC and GluD) and a solute-binding protein (GluB).

It localises to the cell membrane. With respect to regulation, binding of glutamate or asparatate induces a higher thermal stability of the protein structure. Part of the ABC transporter complex GluABCD involved in glutamate uptake. Binds glutamate with a high affinity. Also binds aspartate with high affinity, suggesting that GluB could be involved in the transport of both amino acid residues into the cell. This Corynebacterium glutamicum (strain ATCC 13032 / DSM 20300 / JCM 1318 / BCRC 11384 / CCUG 27702 / LMG 3730 / NBRC 12168 / NCIMB 10025 / NRRL B-2784 / 534) protein is Glutamate-binding protein GluB.